A 1166-amino-acid polypeptide reads, in one-letter code: Poly [ADP-ribose] polymerase tankyrase-2 (1166 aa).

4 ANK repeats span residues 23 to 52, 57 to 86, 90 to 119, and 123 to 152; these read PSAR…VNSR, RKST…NVQA, GGLI…DPNA, and WNYT…EPTI. Asn-203 is subject to (3S)-3-hydroxyasparagine; by HIF1AN. 7 ANK repeats span residues 210–239, 243–272, 276–305, 363–395, 399–428, 432–461, and 463–489; these read RKST…DVHA, GDLV…CVNA, WQFT…DPTL, THET…NTNE, EFLT…KVNA, LGQT…DPNI, and SLQG…SLGH. His-238 carries the post-translational modification (3S)-3-hydroxyhistidine; by HIF1AN. A (3S)-3-hydroxyasparagine; by HIF1AN modification is found at Asn-271. The residue at position 427 (Asn-427) is a (3S)-3-hydroxyasparagine; by HIF1AN. Asn-518 carries the (3S)-3-hydroxyasparagine; by HIF1AN modification. 4 ANK repeats span residues 525 to 554, 558 to 587, 591 to 620, and 624 to 652; these read RQST…DVHA, GGLV…VVNV, WKFT…DPTK, and DGNT…LLDA. The HIF1AN-binding stretch occupies residues 545–553; it reads LLQHGADVH. His-553 bears the (3S)-3-hydroxyhistidine; by HIF1AN mark. Position 586 is a (3S)-3-hydroxyasparagine; by HIF1AN (Asn-586). Residues Asn-671, Asn-706, and Asn-739 each carry the (3S)-3-hydroxyasparagine; by HIF1AN modification. ANK repeat units lie at residues 678 to 707, 711 to 740, and 744 to 773; these read RHST…DVNA, GGLI…CVNA, and WAFT…DPTL. The 64-residue stretch at 873–936 folds into the SAM domain; that stretch reads GIDFSITQFI…IKGVERLISG (64 aa). The region spanning 959–1164 is the PARP catalytic domain; that stretch reads SPDDKEFQSV…YQIVRPEGMV (206 aa). The Zn(2+) site is built by Cys-1081, His-1084, Cys-1089, and Cys-1092.

Belongs to the ARTD/PARP family. In terms of assembly, oligomerizes and associates with TNKS. Interacts with the cytoplasmic domain of LNPEP/Otase in SLC2A4/GLUT4-vesicles. Binds to the N-terminus of Grb14 and TRF1 with its ankyrin repeat region. Interacts with HIF1AN. Interacts with RNF146; this interaction leads to ubiquitination and proteasomal degradation. Interacts with NUMA1. Post-translationally, ubiquitinated by RNF146 when auto-poly-ADP-ribosylated, leading to its degradation. Deubiquitinated by USP25; leading to stabilization. ADP-ribosylated (-auto). Poly-ADP-ribosylated protein is recognized by RNF146, followed by ubiquitination.

The protein resides in the cytoplasm. It is found in the golgi apparatus membrane. The protein localises to the nucleus. Its subcellular location is the chromosome. It localises to the telomere. It carries out the reaction NAD(+) + (ADP-D-ribosyl)n-acceptor = nicotinamide + (ADP-D-ribosyl)n+1-acceptor + H(+).. The catalysed reaction is L-aspartyl-[protein] + NAD(+) = 4-O-(ADP-D-ribosyl)-L-aspartyl-[protein] + nicotinamide. It catalyses the reaction L-glutamyl-[protein] + NAD(+) = 5-O-(ADP-D-ribosyl)-L-glutamyl-[protein] + nicotinamide. Functionally, poly-ADP-ribosyltransferase involved in various processes such as Wnt signaling pathway, telomere length and vesicle trafficking. Acts as an activator of the Wnt signaling pathway by mediating poly-ADP-ribosylation of AXIN1 and AXIN2, 2 key components of the beta-catenin destruction complex: poly-ADP-ribosylated target proteins are recognized by RNF146, which mediates their ubiquitination and subsequent degradation. Also mediates poly-ADP-ribosylation of BLZF1 and CASC3, followed by recruitment of RNF146 and subsequent ubiquitination. Mediates poly-ADP-ribosylation of TERF1, thereby contributing to the regulation of telomere length. Stimulates 26S proteasome activity. The chain is Poly [ADP-ribose] polymerase tankyrase-2 from Mus musculus (Mouse).